The sequence spans 317 residues: Probable deoxyhypusine synthase 1 (317 aa).

The Nucleophile role is filled by Lys285.

It belongs to the deoxyhypusine synthase family. Requires NAD(+) as cofactor.

It catalyses the reaction [eIF5A protein]-L-lysine + spermidine = [eIF5A protein]-deoxyhypusine + propane-1,3-diamine. It participates in protein modification; eIF5A hypusination. Its function is as follows. Catalyzes the NAD-dependent oxidative cleavage of spermidine and the subsequent transfer of the butylamine moiety of spermidine to the epsilon-amino group of a specific lysine residue of the eIF-5A precursor protein to form the intermediate deoxyhypusine residue. This chain is Probable deoxyhypusine synthase 1 (dys1), found in Methanosarcina mazei (strain ATCC BAA-159 / DSM 3647 / Goe1 / Go1 / JCM 11833 / OCM 88) (Methanosarcina frisia).